Consider the following 95-residue polypeptide: MSFKPLHDRIAIKPIEQEEKTKGGIIIPDTVKEKPMQGEVVAVGNGIRNQKGEIHPLELKVGDKVLYGKWAGTEIEIKGTKLIVMKESDVFGIIN.

The protein belongs to the GroES chaperonin family. In terms of assembly, heptamer of 7 subunits arranged in a ring. Interacts with the chaperonin GroEL.

It localises to the cytoplasm. Functionally, together with the chaperonin GroEL, plays an essential role in assisting protein folding. The GroEL-GroES system forms a nano-cage that allows encapsulation of the non-native substrate proteins and provides a physical environment optimized to promote and accelerate protein folding. GroES binds to the apical surface of the GroEL ring, thereby capping the opening of the GroEL channel. The protein is Co-chaperonin GroES of Rickettsia rickettsii (strain Sheila Smith).